The sequence spans 624 residues: MRGLAKLFFLSCSFVSLVSSEKTDESPTAVSDNYMPKATATIDPSVFALSNDFEITDVPTTREYTFDIAKAFASPDGYEREVYVVNNMFPGPVIEANTGDTIIVHVNNHLDEGQSLHWHGLRQLGTAFMDGVPGITQCPIPPGGSFTYNFTVSHQSGTYWWHSHYSNSMADGIWGPLIVHSPNEPLQRGRDYDEDRIVFITDWMHDNSEIIIAALATPEGYKGNIAPPQGDAILINGRGQTNCTATGSSSCFYPPPPEIQVPVNCRVRLRFISATAHPMYRISIDNHPMEVVEADGTAVYGPTVHEISVAPGERYSAIINTNEGKEGDAFWLRTSVALSCMFGAVSQEGLAVVRYTGNGMVSTEEPQTSAWSDLAGVTVPCTGLDQTYTLSPRDSLSAPREPLQSHFFNSERGAFVNVLGNTFQGYGFNNISYQNQIFNPLLSIVQRGGSCENTLVSSRTFPDFGPGNIIINNLDTVIDHPYHLHGNEFQVIGRGTGALSIDNLTNIDFTLDNPVRKDTLWIQGGSWAVLRITADNPGVWALHCHIGWHLTEGKLAVIVVQPSAIGHMESPESWTNLCANTDPNAFGPAKRSSSPSIQSSKTSSFQYLREVKGKVVKRRGAREA.

An N-terminal signal peptide occupies residues 1 to 20; that stretch reads MRGLAKLFFLSCSFVSLVSS. 2 Plastocyanin-like domains span residues 72 to 183 and 195 to 343; these read FASP…HSPN and DRIV…CMFG. Residues histidine 117 and histidine 119 each contribute to the Cu cation site. Cysteine 138 and cysteine 578 are oxidised to a cystine. An N-linked (GlcNAc...) asparagine glycan is attached at asparagine 149. Residues histidine 162 and histidine 164 each contribute to the Cu cation site. N-linked (GlcNAc...) asparagine glycans are attached at residues asparagine 242 and asparagine 430. Residues 469–562 enclose the Plastocyanin-like 3 domain; it reads IIINNLDTVI…GKLAVIVVQP (94 aa). Histidine 480, histidine 483, and histidine 485 together coordinate Cu cation. Asparagine 503 is a glycosylation site (N-linked (GlcNAc...) asparagine). Histidine 543, cysteine 544, histidine 545, and histidine 549 together coordinate Cu cation. Residues 579-604 are disordered; the sequence is ANTDPNAFGPAKRSSSPSIQSSKTSS. Residues 592–604 show a composition bias toward low complexity; that stretch reads SSSPSIQSSKTSS.

It belongs to the multicopper oxidase family. The cofactor is Cu cation.

Its subcellular location is the secreted. It is found in the cell wall. It catalyses the reaction 4 hydroquinone + O2 = 4 benzosemiquinone + 2 H2O. In terms of biological role, laccase that catalyzes the oxidation of certain aromatic compounds, including L-dopa, to quinones, which then polymerize to melanin. Able to oxidize a wide variety of aromatic diphenol and diamino groups in the ortho, meta, and para positions but not monophenolic groups such as in phenol, tyramine, or tyrosine. Plays an important role in virulence. Plays a role in dissemination to extrapulmonary sites but is not involved in pulmonary growth or in elicitation of cellular immune responses in the lung. This is Laccase-1 from Cryptococcus neoformans var. neoformans serotype D (strain B-3501A) (Filobasidiella neoformans).